Here is a 41-residue protein sequence, read N- to C-terminus: Histone H3.2 (41 aa).

Positions 1–41 (MARAKQTARKSTGAEAPRKQLASKAARKSAPATGGIKKPHR) are disordered.

This sequence belongs to the histone H3 family. As to quaternary structure, the nucleosome is a histone octamer containing two molecules each of H2A, H2B, H3 and H4 assembled in one H3-H4 heterotetramer and two H2A-H2B heterodimers. The octamer wraps approximately 147 bp of DNA.

Its subcellular location is the nucleus. It localises to the chromosome. Its function is as follows. Core component of nucleosome. Nucleosomes wrap and compact DNA into chromatin, limiting DNA accessibility to the cellular machineries which require DNA as a template. Histones thereby play a central role in transcription regulation, DNA repair, DNA replication and chromosomal stability. DNA accessibility is regulated via a complex set of post-translational modifications of histones, also called histone code, and nucleosome remodeling. This chain is Histone H3.2, found in Tetrahymena borealis.